A 471-amino-acid chain; its full sequence is Putative multidrug resistance protein MdtD (471 aa).

Residues 1–11 (MTELPDSTRWQ) lie on the Periplasmic side of the membrane. A helical transmembrane segment spans residues 12-32 (LWIVAFGFFMQSLDTTIVNTA). Over 33–48 (LPSMAQSLGESPLHMH) the chain is Cytoplasmic. Residues 49–69 (MVIVSYVLTVAVMLPASGWLA) form a helical membrane-spanning segment. At 70 to 76 (DKVGVRN) the chain is on the periplasmic side. Residues 77–97 (IFFTAIVLFTLGSLFCALSGT) form a helical membrane-spanning segment. At 98–101 (LNEL) the chain is on the cytoplasmic side. A helical transmembrane segment spans residues 102–124 (LLARALQGVGGAMMVPVGRLTVM). Residues 125 to 137 (KIVPREQYMAAMT) lie on the Periplasmic side of the membrane. A helical membrane pass occupies residues 138–158 (FVTLPGQVGPLLGPALGGLLV). Over 159–164 (EYASWH) the chain is Cytoplasmic. A helical membrane pass occupies residues 165 to 185 (WIFLINIPVGIIGAIATLLLM). Over 186-196 (PNYTMQTRRFD) the chain is Periplasmic. The helical transmembrane segment at 197–217 (LSGFLLLAVGMAVLTLALDGS) threads the bilayer. Residues 218–224 (KGTGLSP) are Cytoplasmic-facing. Residues 225–245 (LAIAGLVAVGVVALVLYLLHA) form a helical membrane-spanning segment. At 246-262 (RNNNRALFSLKLFRTRT) the chain is on the periplasmic side. Residues 263 to 283 (FSLGLAGSFAGRIGSGMLPFM) traverse the membrane as a helical segment. Over 284-285 (TP) the chain is Cytoplasmic. The chain crosses the membrane as a helical span at residues 286–306 (VFLQIGLGFSPFHAGLMMIPM). Residues 307 to 341 (VLGSMGMKRIVVQVVNRFGYRRVLVATTLGLSLIT) are Periplasmic-facing. Residues 342-362 (LLFMTTALLGWYYVLPFVLFL) traverse the membrane as a helical segment. The Cytoplasmic portion of the chain corresponds to 363 to 395 (QGMVNSTRFSSMNTLTLKDLPDNLASSGNSLLS). Residues 396–416 (MIMQLSMSIGVTIAGLLLGLF) traverse the membrane as a helical segment. The Periplasmic segment spans residues 417-430 (GSQHVSVDSGTTQT). Residues 431–451 (VFMYTWLSMAFIIALPAFIFA) traverse the membrane as a helical segment. Over 452–471 (RVPNDTHQNVAISRRKRSAQ) the chain is Cytoplasmic.

Belongs to the major facilitator superfamily. TCR/Tet family.

Its subcellular location is the cell inner membrane. This chain is Putative multidrug resistance protein MdtD, found in Shigella sonnei (strain Ss046).